Consider the following 504-residue polypeptide: Glucan endo-1,3-beta-glucosidase 7 (504 aa).

A signal peptide spans 1–22 (MALSISIYFLLIFLSHFPSSHA). Glutamate 119 serves as the catalytic Proton donor. Residue glutamate 264 is the Nucleophile of the active site. An intrachain disulfide couples cysteine 365 to cysteine 427.

This sequence belongs to the glycosyl hydrolase 17 family. Contains two additional disulfide bonds.

Its subcellular location is the secreted. It localises to the cell wall. It catalyses the reaction Hydrolysis of (1-&gt;3)-beta-D-glucosidic linkages in (1-&gt;3)-beta-D-glucans.. The polypeptide is Glucan endo-1,3-beta-glucosidase 7 (Arabidopsis thaliana (Mouse-ear cress)).